We begin with the raw amino-acid sequence, 44 residues long: Large ribosomal subunit protein bL34 (44 aa).

This sequence belongs to the bacterial ribosomal protein bL34 family.

This chain is Large ribosomal subunit protein bL34, found in Buchnera aphidicola subsp. Cinara cedri (strain Cc).